We begin with the raw amino-acid sequence, 384 residues long: Eukaryotic translation initiation factor 3 subunit M (384 aa).

Residues 184 to 346 (ENRKAIEAMI…KKILITGAFP (163 aa)) enclose the PCI domain.

This sequence belongs to the eIF-3 subunit M family. As to quaternary structure, component of the eukaryotic translation initiation factor 3 (eIF-3) complex.

The protein localises to the cytoplasm. Functionally, component of the eukaryotic translation initiation factor 3 (eIF-3) complex, which is involved in protein synthesis of a specialized repertoire of mRNAs and, together with other initiation factors, stimulates binding of mRNA and methionyl-tRNAi to the 40S ribosome. The eIF-3 complex specifically targets and initiates translation of a subset of mRNAs involved in cell proliferation. In Schistosoma japonicum (Blood fluke), this protein is Eukaryotic translation initiation factor 3 subunit M.